Consider the following 173-residue polypeptide: Crossover junction endodeoxyribonuclease RuvC (173 aa).

Residues Asp-8, Glu-67, and Asp-139 contribute to the active site. Positions 8, 67, and 139 each coordinate Mg(2+).

This sequence belongs to the RuvC family. As to quaternary structure, homodimer which binds Holliday junction (HJ) DNA. The HJ becomes 2-fold symmetrical on binding to RuvC with unstacked arms; it has a different conformation from HJ DNA in complex with RuvA. In the full resolvosome a probable DNA-RuvA(4)-RuvB(12)-RuvC(2) complex forms which resolves the HJ. Requires Mg(2+) as cofactor.

The protein localises to the cytoplasm. It carries out the reaction Endonucleolytic cleavage at a junction such as a reciprocal single-stranded crossover between two homologous DNA duplexes (Holliday junction).. The RuvA-RuvB-RuvC complex processes Holliday junction (HJ) DNA during genetic recombination and DNA repair. Endonuclease that resolves HJ intermediates. Cleaves cruciform DNA by making single-stranded nicks across the HJ at symmetrical positions within the homologous arms, yielding a 5'-phosphate and a 3'-hydroxyl group; requires a central core of homology in the junction. The consensus cleavage sequence is 5'-(A/T)TT(C/G)-3'. Cleavage occurs on the 3'-side of the TT dinucleotide at the point of strand exchange. HJ branch migration catalyzed by RuvA-RuvB allows RuvC to scan DNA until it finds its consensus sequence, where it cleaves and resolves the cruciform DNA. This Photobacterium profundum (strain SS9) protein is Crossover junction endodeoxyribonuclease RuvC.